The primary structure comprises 77 residues: Acyl carrier protein (77 aa).

A Carrier domain is found at 1–76 (MATFDDVKAV…DVVNYIDNLK (76 aa)). An O-(pantetheine 4'-phosphoryl)serine modification is found at serine 36.

Belongs to the acyl carrier protein (ACP) family. 4'-phosphopantetheine is transferred from CoA to a specific serine of apo-ACP by AcpS. This modification is essential for activity because fatty acids are bound in thioester linkage to the sulfhydryl of the prosthetic group.

It is found in the cytoplasm. The protein operates within lipid metabolism; fatty acid biosynthesis. Functionally, carrier of the growing fatty acid chain in fatty acid biosynthesis. This is Acyl carrier protein from Campylobacter jejuni subsp. doylei (strain ATCC BAA-1458 / RM4099 / 269.97).